The primary structure comprises 327 residues: UDP-N-acetylenolpyruvoylglucosamine reductase (327 aa).

The 182-residue stretch at 42-223 (RTGGLAELFY…RAAMDEVALH (182 aa)) folds into the FAD-binding PCMH-type domain. The active site involves R188. S237 (proton donor) is an active-site residue. E307 is an active-site residue.

This sequence belongs to the MurB family. It depends on FAD as a cofactor.

Its subcellular location is the cytoplasm. The catalysed reaction is UDP-N-acetyl-alpha-D-muramate + NADP(+) = UDP-N-acetyl-3-O-(1-carboxyvinyl)-alpha-D-glucosamine + NADPH + H(+). Its pathway is cell wall biogenesis; peptidoglycan biosynthesis. Its function is as follows. Cell wall formation. The chain is UDP-N-acetylenolpyruvoylglucosamine reductase from Bartonella tribocorum (strain CIP 105476 / IBS 506).